Here is a 37-residue protein sequence, read N- to C-terminus: MKVRASVKKMCDKCRVIRRHGRVMVICTNPKHKQRQG.

Belongs to the bacterial ribosomal protein bL36 family.

This chain is Large ribosomal subunit protein bL36, found in Parasynechococcus marenigrum (strain WH8102).